The sequence spans 111 residues: Antitoxin PrlF (111 aa).

A SpoVT-AbrB domain is found at 12-59; that stretch reads TTESKVTIRGQTTIPAPVREALKLKPGQDSIHYEILPGGQVFMCRLGD.

Homodimer; forms a complex with YhaV with stoichiometry PrlF(2)-YhaV(4), possibly as a YhaV(2)-PrlF(2)-YhaV(2) complex like the MazFE complex. This complex is seen to dimerize in solution.

It is found in the cytoplasm. Antitoxin component of a type II toxin-antitoxin (TA) system. Labile antitoxin that binds to the YhaV toxin and neutralizes its ribonuclease activity. Also acts as a transcription factor. The YhaV/PrlF complex binds the prlF-yhaV operon, probably negatively regulating its expression. In terms of biological role, negatively regulates its own expression as well as relieving the export block imposed by high-level synthesis of the LamB-LacZ hybrid protein. Overexpression leads to increased doubling time and also suppresses a htrA (degP) null phenotype. The sequence is that of Antitoxin PrlF (prlF) from Escherichia coli (strain K12).